Here is a 177-residue protein sequence, read N- to C-terminus: ATP synthase subunit b (177 aa).

The helical transmembrane segment at 19–39 (LFPNLPNFIAHVIATIVLVVI) threads the bilayer.

This sequence belongs to the ATPase B chain family. As to quaternary structure, F-type ATPases have 2 components, F(1) - the catalytic core - and F(0) - the membrane proton channel. F(1) has five subunits: alpha(3), beta(3), gamma(1), delta(1), epsilon(1). F(0) has three main subunits: a(1), b(2) and c(10-14). The alpha and beta chains form an alternating ring which encloses part of the gamma chain. F(1) is attached to F(0) by a central stalk formed by the gamma and epsilon chains, while a peripheral stalk is formed by the delta and b chains.

The protein resides in the cell membrane. Its function is as follows. F(1)F(0) ATP synthase produces ATP from ADP in the presence of a proton or sodium gradient. F-type ATPases consist of two structural domains, F(1) containing the extramembraneous catalytic core and F(0) containing the membrane proton channel, linked together by a central stalk and a peripheral stalk. During catalysis, ATP synthesis in the catalytic domain of F(1) is coupled via a rotary mechanism of the central stalk subunits to proton translocation. In terms of biological role, component of the F(0) channel, it forms part of the peripheral stalk, linking F(1) to F(0). The chain is ATP synthase subunit b from Mesoplasma florum (strain ATCC 33453 / NBRC 100688 / NCTC 11704 / L1) (Acholeplasma florum).